The sequence spans 126 residues: Glycine cleavage system H protein (126 aa).

The region spanning 22–104 is the Lipoyl-binding domain; sequence IATVGITAFA…YGRGWLFKVE (83 aa). Lys63 is subject to N6-lipoyllysine.

Belongs to the GcvH family. As to quaternary structure, the glycine cleavage system is composed of four proteins: P, T, L and H. (R)-lipoate serves as cofactor.

In terms of biological role, the glycine cleavage system catalyzes the degradation of glycine. The H protein shuttles the methylamine group of glycine from the P protein to the T protein. The protein is Glycine cleavage system H protein of Thermobifida fusca (strain YX).